The sequence spans 311 residues: Transcriptional repressor scratch 2 (311 aa).

An SNAG domain region spans residues 1 to 20; the sequence is MPRSFLVKKIKADGFQCSGV. Disordered stretches follow at residues 71–90 and 120–156; these read PAYP…PQSS and RRRA…ATAG. The segment covering 124–146 has biased composition (gly residues); it reads GAGGDAAGAGDAGGGGGGGGGGE. C2H2-type zinc fingers lie at residues 161–183, 192–214, 218–240, and 246–268; these read HACA…KQTH, RKCP…VLTH, HKCG…MRSH, and FGCA…MQTH. The segment at 274 to 297 adopts a C2H2-type 5; atypical zinc-finger fold; it reads YRCRQCDKSFALKSYLHKHCEAAC.

This sequence belongs to the snail C2H2-type zinc-finger protein family.

Its subcellular location is the nucleus. Its function is as follows. May be involved in transcriptional regulation. This Mus musculus (Mouse) protein is Transcriptional repressor scratch 2 (Scrt2).